Reading from the N-terminus, the 112-residue chain is Protein Churchill (112 aa).

Zn(2+)-binding residues include Cys2, Cys5, Cys30, Cys33, His59, Cys61, Cys64, His66, His71, Cys88, and Cys91.

The protein belongs to the Churchill family.

Functionally, transcriptional activator that mediates FGF signaling during neural development. Plays a role in the regulation of cell movement. Does not bind DNA by itself. This Xenopus laevis (African clawed frog) protein is Protein Churchill (churc1).